Reading from the N-terminus, the 539-residue chain is Diacylglycerol O-acyltransferase 1 (539 aa).

A disordered region spans residues 1 to 104; sequence MAISDMPEST…NDGGEKIANG (104 aa). The segment covering 33-52 has biased composition (polar residues); that stretch reads TETTEVSDSNSKTTDPDSGN. Positions 56–80 are enriched in basic and acidic residues; that stretch reads ESVRVRDSSTDESLARKSCEDDGSR. A run of 7 helical transmembrane segments spans residues 143 to 163, 187 to 207, 219 to 239, 244 to 264, 294 to 314, 334 to 354, and 383 to 403; these read HAGLFNLCIVVLVAVNSRLII, WPLLMCCLTLPIFPAAAFVVE, VVLLLHFIITTAALLYPVFVI, SVVLSGVTLMLFACIVWLKLV, YPYSVSFKSLAYFMVAPTLCY, VKLIIFTGVMGFIIEQYINPI, and VWLCMFYCFFHLWLNILAELL. Positions 410–416 match the FYXDWWN motif motif; sequence FYKDWWN. Transmembrane regions (helical) follow at residues 451–471, 473–493, and 506–526; these read GVAILIAFFVSAIFHELCIAV, CHIFKLWAFIGIMCQVPLVLI, and VGNMIFWFFFCILGQPMCVLL. H465 is a catalytic residue.

The protein belongs to the membrane-bound acyltransferase family. Sterol o-acyltransferase subfamily.

It is found in the endoplasmic reticulum membrane. It catalyses the reaction an acyl-CoA + a 1,2-diacyl-sn-glycerol = a triacyl-sn-glycerol + CoA. Its pathway is glycerolipid metabolism; triacylglycerol biosynthesis. Its function is as follows. Major contributor to triacylglycerol (TAG) synthesis and oil accumulation in developing seeds. Catalyzes the acylation of the sn-3 hydroxy group of sn-1,2-diacylglycerol using acyl-CoA. Has a marked preference for oleoyl-CoA as substrate. This Corylus americana (American hazelnut) protein is Diacylglycerol O-acyltransferase 1.